Here is a 106-residue protein sequence, read N- to C-terminus: Large ribosomal subunit protein bL21 (106 aa).

Belongs to the bacterial ribosomal protein bL21 family. Part of the 50S ribosomal subunit. Contacts protein L20.

Functionally, this protein binds to 23S rRNA in the presence of protein L20. This Chlamydia abortus (strain DSM 27085 / S26/3) (Chlamydophila abortus) protein is Large ribosomal subunit protein bL21.